The following is a 501-amino-acid chain: Cytochrome P450 4c21 (501 aa).

Residues glutamate 309 and cysteine 447 each contribute to the heme site.

Belongs to the cytochrome P450 family. It depends on heme as a cofactor.

It is found in the endoplasmic reticulum membrane. The protein resides in the microsome membrane. The catalysed reaction is an organic molecule + reduced [NADPH--hemoprotein reductase] + O2 = an alcohol + oxidized [NADPH--hemoprotein reductase] + H2O + H(+). The sequence is that of Cytochrome P450 4c21 (CYP4C21) from Blattella germanica (German cockroach).